The chain runs to 92 residues: Small ribosomal subunit protein bS20 (92 aa).

2 disordered regions span residues 1–25 and 68–92; these read MALRHKSAQKRHRQSLKRRAINRAK and HKNAAARKKSRLAKAINKAKAAQQA. Residues 80 to 92 are compositionally biased toward low complexity; it reads AKAINKAKAAQQA.

This sequence belongs to the bacterial ribosomal protein bS20 family.

Functionally, binds directly to 16S ribosomal RNA. This is Small ribosomal subunit protein bS20 from Deinococcus radiodurans (strain ATCC 13939 / DSM 20539 / JCM 16871 / CCUG 27074 / LMG 4051 / NBRC 15346 / NCIMB 9279 / VKM B-1422 / R1).